The chain runs to 163 residues: Leptin (163 aa).

An N-terminal signal peptide occupies residues Met-1–Ala-18. Cys-113 and Cys-163 are oxidised to a cystine.

It belongs to the leptin family. Not exclusively localized in adipose tissue but is also expressed in liver.

The protein localises to the secreted. Its function is as follows. Key player in the regulation of energy balance and body weight control. Once released into the circulation, has central and peripheral effects by binding LEPR, found in many tissues, which results in the activation of several major signaling pathways. The sequence is that of Leptin (LEP) from Gallus gallus (Chicken).